Reading from the N-terminus, the 264-residue chain is 3-methyl-2-oxobutanoate hydroxymethyltransferase (264 aa).

Residues Asp45 and Asp84 each coordinate Mg(2+). Residues 45–46, Asp84, and Lys112 each bind 3-methyl-2-oxobutanoate; that span reads DS. Residue Glu114 participates in Mg(2+) binding. Glu181 acts as the Proton acceptor in catalysis.

The protein belongs to the PanB family. As to quaternary structure, homodecamer; pentamer of dimers. The cofactor is Mg(2+).

Its subcellular location is the cytoplasm. It catalyses the reaction 3-methyl-2-oxobutanoate + (6R)-5,10-methylene-5,6,7,8-tetrahydrofolate + H2O = 2-dehydropantoate + (6S)-5,6,7,8-tetrahydrofolate. Its pathway is cofactor biosynthesis; (R)-pantothenate biosynthesis; (R)-pantoate from 3-methyl-2-oxobutanoate: step 1/2. Its function is as follows. Catalyzes the reversible reaction in which hydroxymethyl group from 5,10-methylenetetrahydrofolate is transferred onto alpha-ketoisovalerate to form ketopantoate. This Shewanella piezotolerans (strain WP3 / JCM 13877) protein is 3-methyl-2-oxobutanoate hydroxymethyltransferase.